A 215-amino-acid chain; its full sequence is Calcium-binding protein 7 (215 aa).

At 1–188 (MPFHPVTAAL…QIRQTCVRKS (188 aa)) the chain is on the cytoplasmic side. EF-hand domains lie at 33–68 (DELEEIREAFKVFDRDGNGFISKQELGTAMRSLGYM) and 69–104 (PNEVELEVIIQRLDMDGDGQVDFEEFVTLLGPKLST). 9 residues coordinate Ca(2+): aspartate 46, aspartate 48, asparagine 50, glutamate 57, aspartate 82, aspartate 84, aspartate 86, glutamine 88, and glutamate 93. The chain crosses the membrane as a helical; Anchor for type IV membrane protein span at residues 189-209 (LICAFAIAFIISVMLIAANQV). Residues 210–215 (LRSGMK) are Extracellular-facing.

In terms of assembly, interacts with PI4KB. This binding competes with FREQ/NCS1 binding in a calcium-dependent manner.

The protein localises to the golgi apparatus. The protein resides in the trans-Golgi network membrane. It is found in the cytoplasm. Its subcellular location is the perinuclear region. It localises to the cell membrane. Negatively regulates Golgi-to-plasma membrane trafficking by interacting with PI4KB and inhibiting its activity. This Homo sapiens (Human) protein is Calcium-binding protein 7 (CABP7).